The sequence spans 544 residues: CTP synthase (544 aa).

The interval 1-267 (MAKFVFITGG…AQRVLQILNL (267 aa)) is amidoligase domain. Ser13 serves as a coordination point for CTP. Residue Ser13 coordinates UTP. An ATP-binding site is contributed by 14–19 (SIGKGI). Tyr54 serves as a coordination point for L-glutamine. Asp71 contacts ATP. Mg(2+)-binding residues include Asp71 and Glu141. CTP-binding positions include 148 to 150 (DIE), 188 to 193 (KTKPTQ), and Lys224. UTP-binding positions include 188–193 (KTKPTQ) and Lys224. The region spanning 292-534 (EIAIVGKYVR…IEAALRSRSR (243 aa)) is the Glutamine amidotransferase type-1 domain. Gly354 contacts L-glutamine. The active-site Nucleophile; for glutamine hydrolysis is the Cys381. L-glutamine-binding positions include 382-385 (LGMQ), Glu405, and Arg462. Residues His507 and Glu509 contribute to the active site.

Belongs to the CTP synthase family. In terms of assembly, homotetramer.

The catalysed reaction is UTP + L-glutamine + ATP + H2O = CTP + L-glutamate + ADP + phosphate + 2 H(+). It catalyses the reaction L-glutamine + H2O = L-glutamate + NH4(+). The enzyme catalyses UTP + NH4(+) + ATP = CTP + ADP + phosphate + 2 H(+). It participates in pyrimidine metabolism; CTP biosynthesis via de novo pathway; CTP from UDP: step 2/2. With respect to regulation, allosterically activated by GTP, when glutamine is the substrate; GTP has no effect on the reaction when ammonia is the substrate. The allosteric effector GTP functions by stabilizing the protein conformation that binds the tetrahedral intermediate(s) formed during glutamine hydrolysis. Inhibited by the product CTP, via allosteric rather than competitive inhibition. Functionally, catalyzes the ATP-dependent amination of UTP to CTP with either L-glutamine or ammonia as the source of nitrogen. Regulates intracellular CTP levels through interactions with the four ribonucleotide triphosphates. The protein is CTP synthase of Synechococcus sp. (strain JA-3-3Ab) (Cyanobacteria bacterium Yellowstone A-Prime).